The sequence spans 159 residues: Style cell-cycle inhibitor 1 (159 aa).

Residues 1–86 (MVSERSSKEK…SDHKLKEGIP (86 aa)) are disordered. A compositionally biased stretch (basic and acidic residues) spans 15 to 50 (ARSEDSSSSDYEEKVKRHRGTEKDDERRSRRSDKKD). Positions 51–63 (KKSHKHHKSSTSK) are enriched in basic residues. Basic and acidic residues predominate over residues 64–85 (KSKDDKPKKKHTESDHKLKEGI).

It is found in the nucleus. Its function is as follows. Component of the auxin signaling transduction pathway that regulates cell proliferation and differentiation during flowers stigmas and styles development. Involved in the regulation of auxin-related genes. This is Style cell-cycle inhibitor 1 from Arabidopsis thaliana (Mouse-ear cress).